The following is a 720-amino-acid chain: Engulfment and cell motility protein 3 (720 aa).

The region spanning 307–479 (EQREQLQALR…VVREQLARTL (173 aa)) is the ELMO domain. Residues 541–663 (LRLCEGMLFR…WTDGLSALLG (123 aa)) enclose the PH domain.

In terms of assembly, probably interacts directly with the SH3-domain of DOCK1 via its SH3-binding site. Part of a complex with DOCK1 and RAC1. Interacts with ADGRB3.

Its subcellular location is the cytoplasm. Involved in cytoskeletal rearrangements required for phagocytosis of apoptotic cells and cell motility. Acts in association with DOCK1 and CRK. Was initially proposed to be required in complex with DOCK1 to activate Rac Rho small GTPases. May enhance the guanine nucleotide exchange factor (GEF) activity of DOCK1. This Rattus norvegicus (Rat) protein is Engulfment and cell motility protein 3 (Elmo3).